A 428-amino-acid polypeptide reads, in one-letter code: Cysteine--tRNA ligase (428 aa).

Residue Cys-23 participates in Zn(2+) binding. A 'HIGH' region motif is present at residues 25-35 (PTVYNDLHLGN). Residues Cys-196, His-221, and Glu-225 each contribute to the Zn(2+) site. The short motif at 253–257 (KMSKS) is the 'KMSKS' region element. ATP is bound at residue Lys-256.

The protein belongs to the class-I aminoacyl-tRNA synthetase family. Monomer. It depends on Zn(2+) as a cofactor.

The protein resides in the cytoplasm. It catalyses the reaction tRNA(Cys) + L-cysteine + ATP = L-cysteinyl-tRNA(Cys) + AMP + diphosphate. This is Cysteine--tRNA ligase (cysS) from Mycoplasma genitalium (strain ATCC 33530 / DSM 19775 / NCTC 10195 / G37) (Mycoplasmoides genitalium).